We begin with the raw amino-acid sequence, 144 residues long: Large ribosomal subunit protein uL15 (144 aa).

Residues 1 to 59 form a disordered region; the sequence is MHLNTLAPAPGAKKSSKRVGRGMGSGLGKTGGRGHKGQKSRSGGSVKPGFEGGQMPIQR. Residues 21-31 are compositionally biased toward gly residues; that stretch reads RGMGSGLGKTG.

The protein belongs to the universal ribosomal protein uL15 family. Part of the 50S ribosomal subunit.

Functionally, binds to the 23S rRNA. The sequence is that of Large ribosomal subunit protein uL15 from Pseudoalteromonas atlantica (strain T6c / ATCC BAA-1087).